Reading from the N-terminus, the 351-residue chain is Methylthioribose-1-phosphate isomerase (351 aa).

Aspartate 244 functions as the Proton donor in the catalytic mechanism.

It belongs to the eIF-2B alpha/beta/delta subunits family. MtnA subfamily.

It is found in the cytoplasm. The protein localises to the nucleus. The enzyme catalyses 5-(methylsulfanyl)-alpha-D-ribose 1-phosphate = 5-(methylsulfanyl)-D-ribulose 1-phosphate. It functions in the pathway amino-acid biosynthesis; L-methionine biosynthesis via salvage pathway; L-methionine from S-methyl-5-thio-alpha-D-ribose 1-phosphate: step 1/6. In terms of biological role, catalyzes the interconversion of methylthioribose-1-phosphate (MTR-1-P) into methylthioribulose-1-phosphate (MTRu-1-P). The chain is Methylthioribose-1-phosphate isomerase from Anopheles gambiae (African malaria mosquito).